A 1015-amino-acid chain; its full sequence is Putative ankyrin repeat protein R96 (1015 aa).

Basic residues predominate over residues 1-14 (MSTVKKSSKKKSSK). The interval 1–37 (MSTVKKSSKKKSSKKSSSGNESSKKSSPKIVPKHTAK) is disordered. ANK repeat units follow at residues 136–165 (NGHK…NIDF), 168–201 (APSN…AVNI), 202–231 (DGRS…DVEV), 340–370 (LGHN…DFQA), 374–403 (NITN…KIVS), 456–485 (SGYR…TIFA), 498–527 (NNND…QFQL), and 535–564 (TVPT…ITDC).

This is Putative ankyrin repeat protein R96 from Acanthamoeba polyphaga mimivirus (APMV).